The primary structure comprises 22 residues: NADH-ubiquinone oxidoreductase 16 kDa subunit (22 aa).

In terms of assembly, complex I is composed of about 45 different subunits.

It is found in the mitochondrion inner membrane. It catalyses the reaction a ubiquinone + NADH + 5 H(+)(in) = a ubiquinol + NAD(+) + 4 H(+)(out). Its function is as follows. Transfer of electrons from NADH to the respiratory chain. The immediate electron acceptor for the enzyme is believed to be ubiquinone. This is NADH-ubiquinone oxidoreductase 16 kDa subunit from Solanum tuberosum (Potato).